Here is a 1237-residue protein sequence, read N- to C-terminus: Zinc finger protein ZFAT (1237 aa).

A C2H2-type 1 zinc finger spans residues phenylalanine 12–histidine 35. The interval arginine 50–arginine 110 is disordered. The segment covering methionine 70–threonine 81 has biased composition (basic residues). Residues leucine 116 to asparagine 141 form a C2H2-type 2; degenerate zinc finger. The segment at glycine 147–glutamate 188 is disordered. A compositionally biased stretch (basic and acidic residues) spans aspartate 156–glycine 186. 7 consecutive C2H2-type zinc fingers follow at residues phenylalanine 271–histidine 293, tyrosine 299–histidine 321, phenylalanine 326–histidine 349, glutamine 354–histidine 377, tyrosine 404–histidine 426, phenylalanine 432–histidine 454, and tyrosine 458–histidine 481. Zn(2+) contacts are provided by cysteine 273, cysteine 276, histidine 289, histidine 293, cysteine 301, cysteine 304, histidine 317, histidine 321, cysteine 328, cysteine 331, histidine 344, histidine 349, cysteine 356, cysteine 359, histidine 372, histidine 377, cysteine 406, cysteine 409, histidine 422, and histidine 426. Zn(2+) is bound by residues cysteine 460, cysteine 463, histidine 476, and histidine 481. Disordered stretches follow at residues valine 551 to cysteine 576 and serine 601 to alanine 671. Residues threonine 565–serine 574 show a composition bias toward polar residues. Over residues serine 601–aspartate 617 the composition is skewed to low complexity. C2H2-type zinc fingers lie at residues leucine 737–histidine 759, tyrosine 765–histidine 788, leucine 793–histidine 817, and tyrosine 825–histidine 848. Zn(2+)-binding residues include cysteine 767, cysteine 770, histidine 783, histidine 788, cysteine 795, cysteine 800, histidine 813, histidine 817, cysteine 827, cysteine 830, histidine 843, histidine 848, cysteine 877, cysteine 880, histidine 894, histidine 898, cysteine 906, cysteine 909, histidine 922, histidine 926, cysteine 934, cysteine 937, histidine 950, and leucine 953. A C2H2-type 14; degenerate zinc finger spans residues methionine 875–histidine 898. 5 consecutive C2H2-type zinc fingers follow at residues phenylalanine 904–histidine 926, histidine 932–histidine 954, phenylalanine 961–histidine 983, phenylalanine 989–histidine 1012, and leucine 1036–histidine 1059.

In terms of tissue distribution, detected in spleen and thymus but not in liver, muscle, heart, kidney, brain, bone marrow or pancreas. Expressed in CD19+, CD4+ and CD8+ lymphocytes but not in CD11b+ lymphocytes or peritoneal macrophages (at protein level).

It is found in the nucleus. The protein resides in the cytoplasm. Its subcellular location is the cytosol. May be involved in transcriptional regulation. Overexpression causes down-regulation of a number of genes involved in the immune response. Some genes are also up-regulated. The protein is Zinc finger protein ZFAT (Zfat) of Mus musculus (Mouse).